A 194-amino-acid chain; its full sequence is dCTP deaminase, dUMP-forming (194 aa).

DCTP-binding positions include 104 to 109 (RSSLGR), D122, 130 to 132 (TLE), Q151, Y165, K172, and Q176. Residue E132 is the Proton donor/acceptor of the active site.

This sequence belongs to the dCTP deaminase family. In terms of assembly, homotrimer.

It carries out the reaction dCTP + 2 H2O = dUMP + NH4(+) + diphosphate. It participates in pyrimidine metabolism; dUMP biosynthesis; dUMP from dCTP: step 1/1. Its function is as follows. Bifunctional enzyme that catalyzes both the deamination of dCTP to dUTP and the hydrolysis of dUTP to dUMP without releasing the toxic dUTP intermediate. The protein is dCTP deaminase, dUMP-forming of Dictyoglomus thermophilum (strain ATCC 35947 / DSM 3960 / H-6-12).